The following is a 128-amino-acid chain: Sm-like protein LSM1B (128 aa).

The 76-residue stretch at 10–85 (YLSTSLASYL…VVLIGELDTE (76 aa)) folds into the Sm domain.

It belongs to the snRNP Sm proteins family. In terms of assembly, component of the heptameric LSM1-LSM7 complex that forms a seven-membered ring structure with a donut shape. The LSM subunits are arranged in the order LSM1, LSM2, LSM3, LSM6, LSM5, LSM7 and LSM4. LSM1B subunit interacts only with its two neighboring subunits, LSM2 and LSM4. In terms of tissue distribution, expressed in roots, leaves, stems, flowers and siliques.

The protein resides in the cytoplasm. The protein localises to the P-body. Component of the cytoplasmic LSM1-LSM7 complex which is involved in mRNA degradation by promoting decapping and leading to accurate 5'-3' mRNA decay. LSM1A and LSM1B are essential for the formation of the cytoplasmic LSM1-LSM7 complex which regulates developmental gene expression by the decapping of specific development-related transcripts. Required for P-body formation during heat stress. The protein is Sm-like protein LSM1B of Arabidopsis thaliana (Mouse-ear cress).